A 391-amino-acid polypeptide reads, in one-letter code: Probable dual-specificity RNA methyltransferase RlmN (391 aa).

The interval 1-33 (MTTPLDTPTREPLPLAPAGPGKLVMSAPRRGKP) is disordered. The segment covering 12–21 (PLPLAPAGPG) has biased composition (low complexity). Glu124 acts as the Proton acceptor in catalysis. A Radical SAM core domain is found at 130–373 (YKNRDTICIS…TTVRDTRGSD (244 aa)). A disulfide bond links Cys137 and Cys378. Positions 144, 148, and 151 each coordinate [4Fe-4S] cluster. S-adenosyl-L-methionine is bound by residues 199-200 (GE), Ser233, 256-258 (SLH), and Asn335. Catalysis depends on Cys378, which acts as the S-methylcysteine intermediate.

Belongs to the radical SAM superfamily. RlmN family. [4Fe-4S] cluster is required as a cofactor.

It localises to the cytoplasm. It carries out the reaction adenosine(2503) in 23S rRNA + 2 reduced [2Fe-2S]-[ferredoxin] + 2 S-adenosyl-L-methionine = 2-methyladenosine(2503) in 23S rRNA + 5'-deoxyadenosine + L-methionine + 2 oxidized [2Fe-2S]-[ferredoxin] + S-adenosyl-L-homocysteine. The enzyme catalyses adenosine(37) in tRNA + 2 reduced [2Fe-2S]-[ferredoxin] + 2 S-adenosyl-L-methionine = 2-methyladenosine(37) in tRNA + 5'-deoxyadenosine + L-methionine + 2 oxidized [2Fe-2S]-[ferredoxin] + S-adenosyl-L-homocysteine. Its function is as follows. Specifically methylates position 2 of adenine 2503 in 23S rRNA and position 2 of adenine 37 in tRNAs. This is Probable dual-specificity RNA methyltransferase RlmN from Kineococcus radiotolerans (strain ATCC BAA-149 / DSM 14245 / SRS30216).